Consider the following 141-residue polypeptide: Globin, extracellular monomeric (141 aa).

The Globin domain occupies Glu1–Asp141. Cys2 and Cys131 are oxidised to a cystine. His94 contacts heme b.

The protein belongs to the globin family. The giant hemoglobins of worms are formed of a monomeric subunit and a disulfide-bonded trimer. This subunit is monomeric.

The protein localises to the secreted. This Tubifex tubifex (Sludge worm) protein is Globin, extracellular monomeric.